Consider the following 146-residue polypeptide: Hemoglobin subunit beta (146 aa).

The Globin domain occupies 2 to 146; it reads HWSAEEKQLI…VAHSLARVYH (145 aa). Residues His63 and His92 each coordinate heme b.

It belongs to the globin family. As to quaternary structure, heterotetramer of two alpha chains and two beta chains. In terms of tissue distribution, red blood cells.

In terms of biological role, involved in oxygen transport from the lung to the various peripheral tissues. In Microcephalophis gracilis (Graceful small-headed sea snake), this protein is Hemoglobin subunit beta (HBB).